Here is a 1388-residue protein sequence, read N- to C-terminus: Rho-associated protein kinase 2 (1388 aa).

A disordered region spans residues 1–24; the sequence is MSRPPPTGKMPGAPEAAAGDGAGA. Residues 92–354 form the Protein kinase domain; the sequence is YDVVKVIGRG…VEEIKSASFF (263 aa). ATP-binding positions include 98–106 and Lys-121; that span reads IGRGAFGEV. The active-site Proton acceptor is the Asp-214. The AGC-kinase C-terminal domain maps to 357 to 425; it reads DQWNWDNIRE…FRENLLLSDS (69 aa). Positions 363 to 784 are interaction with PPP1R12A; the sequence is NIRETAAPVV…LNELLKQKDV (422 aa). The segment at 373–420 is interaction with NPM1; it reads PELSSDIDSSNFDDIEDDKGDVETFPIPKAFVGNQLPFIGFTYFRENL. Thr-414 is subject to Phosphothreonine; by ROCK2. Coiled coils occupy residues 439 to 1024 and 1052 to 1131; these read SEES…EKQL and SDTD…IGMD. The region spanning 497–573 is the REM-1 domain; sequence TLRQLEREKA…LDEANALLRT (77 aa). The span at 513–530 shows a compositional bias: basic and acidic residues; sequence AEYQRKADHEADKKRNLE. Positions 513–532 are disordered; it reads AEYQRKADHEADKKRNLEND. A Phosphotyrosine; by SRC modification is found at Tyr-722. Residues 979–1047 form the RhoBD domain; that stretch reads TSDVANLANE…LAEIMNRKEP (69 aa). The RHOA binding stretch occupies residues 979–1047; the sequence is TSDVANLANE…LAEIMNRKEP (69 aa). The residue at position 1137 (Ser-1137) is a Phosphoserine. Residues 1150–1349 form the PH domain; it reads ESRLEGWLSL…WVSRLVKKIP (200 aa). Thr-1212 carries the post-translational modification Phosphothreonine. The Phorbol-ester/DAG-type zinc-finger motif lies at 1260–1315; the sequence is GHEFIPTLYHFPTNCEACMKPLWHMFKPPPALECSRCHIKCHKDHMDKKEEIIAPC. The tract at residues 1345–1388 is disordered; that stretch reads VKKIPKKPPAPDPFARSSPRTSMKIQQNQSIRRPSRQLAPNKPS. 2 positions are modified to phosphoserine: Ser-1362 and Ser-1374. Residues 1362–1376 are compositionally biased toward polar residues; that stretch reads SPRTSMKIQQNQSIR.

This sequence belongs to the protein kinase superfamily. AGC Ser/Thr protein kinase family. Homodimer. Interacts with IRS1. Interacts with RAF1. Interacts with RHOA (activated by GTP), RHOB, RHOC. Interacts with PPP1R12A. Interacts with EP300. Interacts with CHORDC1. Interacts with BRCA2. Interacts with NPM1; this interaction enhances its activity. Interacts with SORL1. Interacts with PJVK. It depends on Mg(2+) as a cofactor. Autophosphorylated. Phosphorylation at Tyr-722 reduces its binding to RHOA and is crucial for focal adhesion dynamics. Dephosphorylation by PTPN11 stimulates its RHOA binding activity. In terms of processing, cleaved by granzyme B during apoptosis. This leads to constitutive activation of the kinase and membrane blebbing. In terms of tissue distribution, highly expressed in brain, lung, liver, skeletal muscle, kidney and testis.

It localises to the cytoplasm. The protein resides in the cell membrane. It is found in the nucleus. The protein localises to the cytoskeleton. Its subcellular location is the microtubule organizing center. It localises to the centrosome. It catalyses the reaction L-seryl-[protein] + ATP = O-phospho-L-seryl-[protein] + ADP + H(+). The enzyme catalyses L-threonyl-[protein] + ATP = O-phospho-L-threonyl-[protein] + ADP + H(+). With respect to regulation, activated by RHOA binding. Inhibited by Y-27632. In terms of biological role, protein kinase which is a key regulator of actin cytoskeleton and cell polarity. Involved in regulation of smooth muscle contraction, actin cytoskeleton organization, stress fiber and focal adhesion formation, neurite retraction, cell adhesion and motility via phosphorylation of ADD1, BRCA2, CNN1, EZR, DPYSL2, EP300, MSN, MYL9/MLC2, NPM1, RDX, PPP1R12A and VIM. Phosphorylates SORL1 and IRF4. Acts as a negative regulator of VEGF-induced angiogenic endothelial cell activation. Positively regulates the activation of p42/MAPK1-p44/MAPK3 and of p90RSK/RPS6KA1 during myogenic differentiation. Plays an important role in the timely initiation of centrosome duplication. Inhibits keratinocyte terminal differentiation. May regulate closure of the eyelids and ventral body wall through organization of actomyosin bundles. Plays a critical role in the regulation of spine and synaptic properties in the hippocampus. Plays a role in placental homeostasis during the perinatal period. Plays an important role in generating the circadian rhythm of the aortic myofilament Ca(2+) sensitivity and vascular contractility by modulating the myosin light chain phosphorylation. The protein is Rho-associated protein kinase 2 (Rock2) of Rattus norvegicus (Rat).